The chain runs to 66 residues: Large ribosomal subunit protein uL29 (66 aa).

The protein belongs to the universal ribosomal protein uL29 family. Part of the 50S ribosomal subunit.

This is Large ribosomal subunit protein uL29 (rpmC) from Bacillus subtilis (strain 168).